A 122-amino-acid polypeptide reads, in one-letter code: Large ribosomal subunit protein uL14 (122 aa).

Belongs to the universal ribosomal protein uL14 family. In terms of assembly, part of the 50S ribosomal subunit. Forms a cluster with proteins L3 and L19. In the 70S ribosome, L14 and L19 interact and together make contacts with the 16S rRNA in bridges B5 and B8.

Binds to 23S rRNA. Forms part of two intersubunit bridges in the 70S ribosome. This chain is Large ribosomal subunit protein uL14, found in Bifidobacterium animalis subsp. lactis (strain AD011).